The following is a 221-amino-acid chain: Histone H1.3 (221 aa).

Residues 1 to 17 (MSETAPAAPAAPAPVEK) show a composition bias toward low complexity. A disordered region spans residues 1–42 (MSETAPAAPAAPAPVEKTPVKKKAKKTGAAAGKRKASGPPVS). An N-acetylserine modification is found at Ser-2. At Ser-2 the chain carries Phosphoserine. At Lys-17 the chain carries N6-acetyllysine. At Thr-18 the chain carries Phosphothreonine. The segment covering 20-36 (VKKKAKKTGAAAGKRKA) has biased composition (basic residues). N6-(beta-hydroxybutyryl)lysine is present on residues Lys-33, Lys-35, and Lys-53. Residues 37–110 (SGPPVSELIT…GASGSFKLNK (74 aa)) enclose the H15 domain. At Arg-55 the chain carries Citrulline. Residues Lys-65, Lys-86, and Lys-91 each carry the N6-(beta-hydroxybutyryl)lysine modification. Positions 92-221 (GTLVQTKGTG…KAKKAAPRKK (130 aa)) are disordered. A Phosphoserine; by PKC modification is found at Ser-105. N6-(beta-hydroxybutyryl)lysine is present on residues Lys-107 and Lys-141. 4 stretches are compositionally biased toward basic residues: residues 120–141 (KAKK…KPKK), 150–161 (KTAKKTPKKAKK), 170–187 (KVSK…KKAA), and 194–221 (KAPK…PRKK).

Belongs to the histone H1/H5 family. In terms of processing, H1 histones are progressively phosphorylated during the cell cycle, becoming maximally phosphorylated during late G2 phase and M phase, and being dephosphorylated sharply thereafter. Hydroxybutyrylation of histones is induced by starvation. Post-translationally, citrullination at Arg-55 (H1R54ci) by PADI4 takes place within the DNA-binding site of H1 and results in its displacement from chromatin and global chromatin decondensation, thereby promoting pluripotency and stem cell maintenance.

It localises to the nucleus. It is found in the chromosome. In terms of biological role, histone H1 protein binds to linker DNA between nucleosomes forming the macromolecular structure known as the chromatin fiber. Histones H1 are necessary for the condensation of nucleosome chains into higher-order structured fibers. Also acts as a regulator of individual gene transcription through chromatin remodeling, nucleosome spacing and DNA methylation. The chain is Histone H1.3 from Mus musculus (Mouse).